The following is a 138-amino-acid chain: Large ribosomal subunit protein uL16 (138 aa).

The protein belongs to the universal ribosomal protein uL16 family. As to quaternary structure, part of the 50S ribosomal subunit.

Binds 23S rRNA and is also seen to make contacts with the A and possibly P site tRNAs. This is Large ribosomal subunit protein uL16 from Syntrophobacter fumaroxidans (strain DSM 10017 / MPOB).